The following is a 1048-amino-acid chain: Self-sufficient cytochrome P450 monooxygenase CYP505E4 (1048 aa).

Residue Cys405 participates in heme binding. In terms of domain architecture, Flavodoxin-like spans 499–640 (VSFFYGSNSG…DLEVWEETNL (142 aa)). FMN contacts are provided by residues 505 to 509 (SNSGT) and 584 to 616 (VFGC…TRLA). One can recognise an FAD-binding FR-type domain in the interval 678-906 (RDLIEAKVTA…RPAKDAFHLP (229 aa)).

It in the N-terminal section; belongs to the cytochrome P450 family. FAD serves as cofactor. Requires FMN as cofactor. The cofactor is heme.

It catalyses the reaction 2 oxidized [cytochrome P450] + NADPH = 2 reduced [cytochrome P450] + NADP(+) + H(+). The enzyme catalyses an organic molecule + reduced [NADPH--hemoprotein reductase] + O2 = an alcohol + oxidized [NADPH--hemoprotein reductase] + H2O + H(+). The catalysed reaction is dodecanoate + reduced [NADPH--hemoprotein reductase] + O2 = 5-hydroxydodecanoate + oxidized [NADPH--hemoprotein reductase] + H2O + H(+). It carries out the reaction tetradecanoate + reduced [NADPH--hemoprotein reductase] + O2 = 7-hydroxytetradecanoate + oxidized [NADPH--hemoprotein reductase] + H2O + H(+). It catalyses the reaction dodecan-1-ol + reduced [NADPH--hemoprotein reductase] + O2 = 1,5-dodecanediol + oxidized [NADPH--hemoprotein reductase] + H2O + H(+). The enzyme catalyses dodecan-1-ol + reduced [NADPH--hemoprotein reductase] + O2 = 1,4-dodecanediol + oxidized [NADPH--hemoprotein reductase] + H2O + H(+). The catalysed reaction is dodecan-1-ol + reduced [NADPH--hemoprotein reductase] + O2 = 1,6-dodecanediol + oxidized [NADPH--hemoprotein reductase] + H2O + H(+). In terms of biological role, self-sufficient cytochrome P450 monooxygenase that catalyzes the regioselective in-chain hydroxylation of alkanes, fatty alcohols, and fatty acids at the omega-7 position. Performs hydroxylation of C10-C16 n-alkanes and C12 and C14 fatty alcohols; and thereby enables the one step biocatalytic synthesis of rare alcohols such as 5-dodecanol and 7-tetradecanol. Converts 1-dodecanol into 1,5-dodecanediol as major product with very little sub-terminally hydroxylated products with the 1,4-dodecanediol and 1,6-dodecanediol more abundant. Converts dodecanoic acid to 5-hydroxydodecanoic acid which can be further converted into delta-dodecalactone by lactonization of the 5-hydroxy acid at low pH. Also gives sub-terminal hydroxylation of dodecanoic acid with 9-hydroxydodecanoic acid being the second most abundant product. This chain is Self-sufficient cytochrome P450 monooxygenase CYP505E4, found in Penicillium expansum (Blue mold rot fungus).